The sequence spans 346 residues: Inositol 2-dehydrogenase/D-chiro-inositol 3-dehydrogenase (346 aa).

Over residues 322-331 the composition is skewed to basic and acidic residues; the sequence is GREESIELPK. The segment at 322–346 is disordered; the sequence is GREESIELPKKPAFYQHSAATPEQV.

It belongs to the Gfo/Idh/MocA family. Homotetramer.

It carries out the reaction myo-inositol + NAD(+) = scyllo-inosose + NADH + H(+). The enzyme catalyses 1D-chiro-inositol + NAD(+) = scyllo-inosine + NADH + H(+). It participates in polyol metabolism; myo-inositol degradation into acetyl-CoA; acetyl-CoA from myo-inositol: step 1/7. Functionally, involved in the oxidation of myo-inositol (MI) and D-chiro-inositol (DCI) to 2-keto-myo-inositol (2KMI or 2-inosose) and 1-keto-D-chiro-inositol (1KDCI), respectively. This is Inositol 2-dehydrogenase/D-chiro-inositol 3-dehydrogenase from Shouchella clausii (strain KSM-K16) (Alkalihalobacillus clausii).